Here is a 228-residue protein sequence, read N- to C-terminus: Phosphoribosylformylglycinamidine synthase subunit PurQ (228 aa).

The region spanning 2-225 is the Glutamine amidotransferase type-1 domain; sequence KAAVISFPGS…INQTEGADVR (224 aa). C86 serves as the catalytic Nucleophile. Catalysis depends on residues H194 and E196.

Part of the FGAM synthase complex composed of 1 PurL, 1 PurQ and 2 PurS subunits.

The protein localises to the cytoplasm. It catalyses the reaction N(2)-formyl-N(1)-(5-phospho-beta-D-ribosyl)glycinamide + L-glutamine + ATP + H2O = 2-formamido-N(1)-(5-O-phospho-beta-D-ribosyl)acetamidine + L-glutamate + ADP + phosphate + H(+). The catalysed reaction is L-glutamine + H2O = L-glutamate + NH4(+). It functions in the pathway purine metabolism; IMP biosynthesis via de novo pathway; 5-amino-1-(5-phospho-D-ribosyl)imidazole from N(2)-formyl-N(1)-(5-phospho-D-ribosyl)glycinamide: step 1/2. Part of the phosphoribosylformylglycinamidine synthase complex involved in the purines biosynthetic pathway. Catalyzes the ATP-dependent conversion of formylglycinamide ribonucleotide (FGAR) and glutamine to yield formylglycinamidine ribonucleotide (FGAM) and glutamate. The FGAM synthase complex is composed of three subunits. PurQ produces an ammonia molecule by converting glutamine to glutamate. PurL transfers the ammonia molecule to FGAR to form FGAM in an ATP-dependent manner. PurS interacts with PurQ and PurL and is thought to assist in the transfer of the ammonia molecule from PurQ to PurL. The sequence is that of Phosphoribosylformylglycinamidine synthase subunit PurQ from Lacticaseibacillus casei (strain BL23) (Lactobacillus casei).